We begin with the raw amino-acid sequence, 198 residues long: Snake venom metalloproteinase neuwiedase (198 aa).

The region spanning 8 to 198 is the Peptidase M12B domain; sequence RYIELVIVAD…QTFLTNHNPQ (191 aa). The Ca(2+) site is built by Glu11 and Asp95. His144 lines the Zn(2+) pocket. Residue Glu145 is part of the active site. Residues His148 and His154 each contribute to the Zn(2+) site. 2 disulfides stabilise this stretch: Cys159/Cys183 and Cys161/Cys166.

Belongs to the venom metalloproteinase (M12B) family. P-I subfamily. Zn(2+) is required as a cofactor. In terms of tissue distribution, expressed by the venom gland.

Its subcellular location is the secreted. Inhibited by EDTA, EGTA and 1,10-phenanthroline, partially inhibited by beta-mercaptoethanol and not inhibited by serine protease inhibitors (leupeptin and aprotinin). Also inhibited by an excess of zinc, mercury and magnesium ions. Extracts of the plant Casearia mariquitensis neutralizes the decrease of platelets and plasma fibrinogen induced by the protease. The same extracts also partially inhibit Bbeta chain cleavage, but not Aalpha chain cleavage. This metalloprotease hydrolyzes the Aalpha chain of fibrin and fibrinogen first followed by the Bbeta chain and shows no effect on the gamma chain. It is also able to degrade type I collagen, fibronectin, laminin and induces inflammatory reaction. It is devoid of hemorrhagic and thrombotic activities, except in lung where it induces pulmonary bleeding. It also induces a mild myotoxic reaction. It is not able to inhibit platelet aggregation, but it induces decrease of platelets and plasma fibrinogen. It contributes to local tissue damage by inducing edema, inflammatory infiltrate and mild myotoxicity, and by degrading extracellular matrix components. In Bothrops pauloensis (Neuwied's lancehead), this protein is Snake venom metalloproteinase neuwiedase.